The chain runs to 81 residues: Putative membrane protein insertion efficiency factor (81 aa).

The tract at residues 60–81 (WNPGGYDPVPTHNTSNSSPMAE) is disordered. The segment covering 70–81 (THNTSNSSPMAE) has biased composition (polar residues).

Belongs to the UPF0161 family.

It is found in the cell inner membrane. Could be involved in insertion of integral membrane proteins into the membrane. The polypeptide is Putative membrane protein insertion efficiency factor (Stutzerimonas stutzeri (strain A1501) (Pseudomonas stutzeri)).